A 154-amino-acid chain; its full sequence is 3-hydroxyacyl-[acyl-carrier-protein] dehydratase FabZ (154 aa).

Histidine 57 is a catalytic residue.

Belongs to the thioester dehydratase family. FabZ subfamily.

It localises to the cytoplasm. The enzyme catalyses a (3R)-hydroxyacyl-[ACP] = a (2E)-enoyl-[ACP] + H2O. Involved in unsaturated fatty acids biosynthesis. Catalyzes the dehydration of short chain beta-hydroxyacyl-ACPs and long chain saturated and unsaturated beta-hydroxyacyl-ACPs. This is 3-hydroxyacyl-[acyl-carrier-protein] dehydratase FabZ from Sinorhizobium medicae (strain WSM419) (Ensifer medicae).